Here is a 308-residue protein sequence, read N- to C-terminus: HTH-type transcriptional activator AllS (308 aa).

Positions 2-59 (FDPETLRTFIAVAETGSFSKAAERLCKTTATISYRIKLLEENTGVALFFRTTRSVTLT) constitute an HTH lysR-type domain. The H-T-H motif DNA-binding region spans 19–38 (FSKAAERLCKTTATISYRIK).

Belongs to the LysR transcriptional regulatory family.

Positive regulator essential for the expression of allD operon. Binds to the allD promoter. The chain is HTH-type transcriptional activator AllS (allS) from Escherichia coli O6:K15:H31 (strain 536 / UPEC).